The sequence spans 129 residues: Large ribosomal subunit protein bL21 (129 aa).

Belongs to the bacterial ribosomal protein bL21 family. As to quaternary structure, part of the 50S ribosomal subunit. Contacts protein L20.

Its function is as follows. This protein binds to 23S rRNA in the presence of protein L20. The sequence is that of Large ribosomal subunit protein bL21 from Microcystis aeruginosa (strain NIES-843 / IAM M-2473).